Here is a 296-residue protein sequence, read N- to C-terminus: MAPSNLPPVFNATSQDIEMLLAAQCHLGSKNLQVHMEPYLWKTRPDGINVINIGKTWEKIVLAARIIAAVDNPADICVISARPYGQRAVLKFAAHTGAVAIAGRFTPGNFTNYITRSFKEPRLIIVTDPRTDHQAIKEASYVNIPVIALCDTDSPTEFVDVAIPTNNKGRHAIGLIWWMLAREVLRLRGTLASRETEWDVVVDLYFYRDPEAEENKEIEEAKVPGAEEVGAAAIESGLVGDSWEAQAAPAFAGAGVPAGAAPGWEAEGGVDWAASSAAPADTWAGESGNPDAGVKW.

The segment covering Ala-274–Ala-284 has biased composition (low complexity). The disordered stretch occupies residues Ala-274–Trp-296.

The protein belongs to the universal ribosomal protein uS2 family. In terms of assembly, component of the small ribosomal subunit. Mature ribosomes consist of a small (40S) and a large (60S) subunit. The 40S subunit contains about 33 different proteins and 1 molecule of RNA (18S). The 60S subunit contains about 49 different proteins and 3 molecules of RNA (25S, 5.8S and 5S). Interacts with RPS21.

It is found in the cytoplasm. Functionally, required for the assembly and/or stability of the 40S ribosomal subunit. Required for the processing of the 20S rRNA-precursor to mature 18S rRNA in a late step of the maturation of 40S ribosomal subunits. The chain is Small ribosomal subunit protein uS2 from Ajellomyces capsulatus (strain G186AR / H82 / ATCC MYA-2454 / RMSCC 2432) (Darling's disease fungus).